Here is a 108-residue protein sequence, read N- to C-terminus: UPF0060 membrane protein YnfA (108 aa).

Residues 1-5 lie on the Periplasmic side of the membrane; sequence MLKTT. Residues 6–26 form a helical membrane-spanning segment; that stretch reads LLFFVTALCEIIGCFLPWLWL. The Cytoplasmic portion of the chain corresponds to 27–30; that stretch reads KRGA. The helical transmembrane segment at 31 to 51 threads the bilayer; sequence SMWWLLPAAASLALFVWLLTL. At 52–60 the chain is on the periplasmic side; the sequence is HPAASGRVY. A helical membrane pass occupies residues 61-81; it reads AAYGGVYVCTALLWLRVVDGV. Topologically, residues 82 to 84 are cytoplasmic; it reads RLT. Residues 85–105 form a helical membrane-spanning segment; the sequence is VYDWCGALIALCGMLIIVVGW. At 106 to 108 the chain is on the periplasmic side; it reads GRT.

It belongs to the UPF0060 family.

It is found in the cell inner membrane. In Salmonella schwarzengrund (strain CVM19633), this protein is UPF0060 membrane protein YnfA.